A 198-amino-acid polypeptide reads, in one-letter code: Large ribosomal subunit protein bL25 (198 aa).

It belongs to the bacterial ribosomal protein bL25 family. CTC subfamily. In terms of assembly, part of the 50S ribosomal subunit; part of the 5S rRNA/L5/L18/L25 subcomplex. Contacts the 5S rRNA. Binds to the 5S rRNA independently of L5 and L18.

Functionally, this is one of the proteins that binds to the 5S RNA in the ribosome where it forms part of the central protuberance. This chain is Large ribosomal subunit protein bL25, found in Gloeothece citriformis (strain PCC 7424) (Cyanothece sp. (strain PCC 7424)).